The sequence spans 579 residues: Glutamine--tRNA ligase (579 aa).

The short motif at 41 to 51 (PEPNGYLHIGH) is the 'HIGH' region element. ATP contacts are provided by residues 42 to 44 (EPN) and 48 to 54 (HIGHAKA). The L-glutamine site is built by Asp74 and Tyr218. ATP is bound by residues Thr237, 285–286 (RL), and 293–295 (MSK). Positions 292–296 (VMSKR) match the 'KMSKS' region motif.

It belongs to the class-I aminoacyl-tRNA synthetase family. As to quaternary structure, monomer.

It is found in the cytoplasm. It carries out the reaction tRNA(Gln) + L-glutamine + ATP = L-glutaminyl-tRNA(Gln) + AMP + diphosphate. The sequence is that of Glutamine--tRNA ligase from Xanthomonas axonopodis pv. citri (strain 306).